The sequence spans 152 residues: Deoxyuridine 5'-triphosphate nucleotidohydrolase (152 aa).

Residues 71 to 73 (RSG), Asn84, 88 to 90 (LID), and Met98 each bind substrate.

Belongs to the dUTPase family. The cofactor is Mg(2+).

It carries out the reaction dUTP + H2O = dUMP + diphosphate + H(+). The protein operates within pyrimidine metabolism; dUMP biosynthesis; dUMP from dCTP (dUTP route): step 2/2. Functionally, this enzyme is involved in nucleotide metabolism: it produces dUMP, the immediate precursor of thymidine nucleotides and it decreases the intracellular concentration of dUTP so that uracil cannot be incorporated into DNA. The sequence is that of Deoxyuridine 5'-triphosphate nucleotidohydrolase from Erwinia tasmaniensis (strain DSM 17950 / CFBP 7177 / CIP 109463 / NCPPB 4357 / Et1/99).